The sequence spans 67 residues: Cold shock protein ScoF (67 aa).

Positions 4–64 (GTVKWFNSEK…GQKGPQAENI (61 aa)) constitute a CSD domain.

Its subcellular location is the cytoplasm. In Streptomyces coelicolor (strain ATCC BAA-471 / A3(2) / M145), this protein is Cold shock protein ScoF (scoF).